The chain runs to 450 residues: tRNA modification GTPase MnmE (450 aa).

The (6S)-5-formyl-5,6,7,8-tetrahydrofolate site is built by arginine 23, glutamate 79, and lysine 118. In terms of domain architecture, TrmE-type G spans glycine 214–glycine 374. Residue asparagine 224 participates in K(+) binding. GTP-binding positions include asparagine 224–serine 229, threonine 243–threonine 249, and aspartate 268–glycine 271. Residue serine 228 coordinates Mg(2+). K(+) contacts are provided by threonine 243, isoleucine 245, and threonine 248. Mg(2+) is bound at residue threonine 249. A (6S)-5-formyl-5,6,7,8-tetrahydrofolate-binding site is contributed by lysine 450.

The protein belongs to the TRAFAC class TrmE-Era-EngA-EngB-Septin-like GTPase superfamily. TrmE GTPase family. Homodimer. Heterotetramer of two MnmE and two MnmG subunits. K(+) serves as cofactor.

The protein localises to the cytoplasm. Functionally, exhibits a very high intrinsic GTPase hydrolysis rate. Involved in the addition of a carboxymethylaminomethyl (cmnm) group at the wobble position (U34) of certain tRNAs, forming tRNA-cmnm(5)s(2)U34. The protein is tRNA modification GTPase MnmE of Francisella tularensis subsp. holarctica (strain OSU18).